Here is a 234-residue protein sequence, read N- to C-terminus: Adenosine 5'-phosphosulfate reductase (234 aa).

[4Fe-4S] cluster-binding residues include Cys-120, Cys-121, Cys-203, and Cys-206. Cys-229 acts as the Nucleophile; cysteine thiosulfonate intermediate in catalysis.

Belongs to the PAPS reductase family. CysH subfamily. Requires [4Fe-4S] cluster as cofactor.

The protein resides in the cytoplasm. It carries out the reaction [thioredoxin]-disulfide + sulfite + AMP + 2 H(+) = adenosine 5'-phosphosulfate + [thioredoxin]-dithiol. Its pathway is sulfur metabolism; hydrogen sulfide biosynthesis; sulfite from sulfate. Its function is as follows. Catalyzes the formation of sulfite from adenosine 5'-phosphosulfate (APS) using thioredoxin as an electron donor. The sequence is that of Adenosine 5'-phosphosulfate reductase from Bacillus cereus (strain AH187).